Reading from the N-terminus, the 577-residue chain is uncharacterized protein (577 aa).

Composition is skewed to polar residues over residues 1 to 21 and 68 to 87; these read MSST…QSAS and SFQN…SKTE. Disordered stretches follow at residues 1–24 and 68–93; these read MSST…SAHP and SFQN…PDDV. 12 helical membrane-spanning segments follow: residues 139 to 159, 174 to 194, 204 to 224, 232 to 252, 262 to 282, 292 to 312, 367 to 387, 402 to 422, 447 to 467, 473 to 493, 504 to 526, and 543 to 563; these read CILA…AVPA, LLTM…WAPL, ILIG…GKDI, FFAG…LADM, ITLF…VGGF, WTEY…YLFC, PICF…YLLL, MGVA…GSGI, LPPM…LSWS, VNWV…LLIF, YLFR…AAGF, and GSLL…FFFF.

Belongs to the major facilitator superfamily. CAR1 family.

The protein resides in the endoplasmic reticulum. It is found in the membrane. This is an uncharacterized protein from Schizosaccharomyces pombe (strain 972 / ATCC 24843) (Fission yeast).